The sequence spans 125 residues: Small ribosomal subunit protein bS6 (125 aa).

A disordered region spans residues Pro-99–Gln-125. Over residues Ser-105–Ser-115 the composition is skewed to basic and acidic residues. Over residues Thr-116 to Gln-125 the composition is skewed to polar residues.

Belongs to the bacterial ribosomal protein bS6 family.

Functionally, binds together with bS18 to 16S ribosomal RNA. In Bordetella petrii (strain ATCC BAA-461 / DSM 12804 / CCUG 43448), this protein is Small ribosomal subunit protein bS6.